Consider the following 271-residue polypeptide: Phosphate import ATP-binding protein PstB (271 aa).

The region spanning 25–266 is the ABC transporter domain; the sequence is FDTKNLNLWY…PSDKRTEDYI (242 aa). Residue 57-64 coordinates ATP; that stretch reads GPSGCGKS.

It belongs to the ABC transporter superfamily. Phosphate importer (TC 3.A.1.7) family. As to quaternary structure, the complex is composed of two ATP-binding proteins (PstB), two transmembrane proteins (PstC and PstA) and a solute-binding protein (PstS).

It is found in the cell membrane. It carries out the reaction phosphate(out) + ATP + H2O = ADP + 2 phosphate(in) + H(+). In terms of biological role, part of the ABC transporter complex PstSACB involved in phosphate import. Responsible for energy coupling to the transport system. This Bacillus cereus (strain ATCC 14579 / DSM 31 / CCUG 7414 / JCM 2152 / NBRC 15305 / NCIMB 9373 / NCTC 2599 / NRRL B-3711) protein is Phosphate import ATP-binding protein PstB.